Here is a 255-residue protein sequence, read N- to C-terminus: tRNA (guanine-N(1)-)-methyltransferase (255 aa).

Residues glycine 113 and 133–138 (IGDYVL) each bind S-adenosyl-L-methionine.

The protein belongs to the RNA methyltransferase TrmD family. In terms of assembly, homodimer.

The protein localises to the cytoplasm. The catalysed reaction is guanosine(37) in tRNA + S-adenosyl-L-methionine = N(1)-methylguanosine(37) in tRNA + S-adenosyl-L-homocysteine + H(+). Its function is as follows. Specifically methylates guanosine-37 in various tRNAs. In Escherichia coli O81 (strain ED1a), this protein is tRNA (guanine-N(1)-)-methyltransferase.